Reading from the N-terminus, the 610-residue chain is Probable indole-3-acetic acid-amido synthetase GH3.1 (610 aa).

Belongs to the IAA-amido conjugating enzyme family. Expressed in flowers.

Functionally, may catalyze the synthesis of indole-3-acetic acid (IAA)-amino acid conjugates, providing a mechanism for the plant to cope with the presence of excess auxin. This chain is Probable indole-3-acetic acid-amido synthetase GH3.1 (GH3.1), found in Oryza sativa subsp. japonica (Rice).